The primary structure comprises 567 residues: Proline--tRNA ligase (567 aa).

The protein belongs to the class-II aminoacyl-tRNA synthetase family. ProS type 1 subfamily. Homodimer.

The protein resides in the cytoplasm. It carries out the reaction tRNA(Pro) + L-proline + ATP = L-prolyl-tRNA(Pro) + AMP + diphosphate. Functionally, catalyzes the attachment of proline to tRNA(Pro) in a two-step reaction: proline is first activated by ATP to form Pro-AMP and then transferred to the acceptor end of tRNA(Pro). As ProRS can inadvertently accommodate and process non-cognate amino acids such as alanine and cysteine, to avoid such errors it has two additional distinct editing activities against alanine. One activity is designated as 'pretransfer' editing and involves the tRNA(Pro)-independent hydrolysis of activated Ala-AMP. The other activity is designated 'posttransfer' editing and involves deacylation of mischarged Ala-tRNA(Pro). The misacylated Cys-tRNA(Pro) is not edited by ProRS. In Fusobacterium nucleatum subsp. nucleatum (strain ATCC 25586 / DSM 15643 / BCRC 10681 / CIP 101130 / JCM 8532 / KCTC 2640 / LMG 13131 / VPI 4355), this protein is Proline--tRNA ligase.